The sequence spans 291 residues: Elongation factor Ts (291 aa).

The tract at residues T80–V83 is involved in Mg(2+) ion dislocation from EF-Tu.

It belongs to the EF-Ts family.

It is found in the cytoplasm. Associates with the EF-Tu.GDP complex and induces the exchange of GDP to GTP. It remains bound to the aminoacyl-tRNA.EF-Tu.GTP complex up to the GTP hydrolysis stage on the ribosome. The polypeptide is Elongation factor Ts (Acinetobacter baumannii (strain AB307-0294)).